The primary structure comprises 330 residues: Glycerol-3-phosphate dehydrogenase [NAD(P)+] (330 aa).

Residues tryptophan 13, arginine 33, and lysine 103 each contribute to the NADPH site. The sn-glycerol 3-phosphate site is built by lysine 103, glycine 131, and threonine 133. Residue alanine 135 coordinates NADPH. Positions 186, 239, 249, 250, and 251 each coordinate sn-glycerol 3-phosphate. Lysine 186 serves as the catalytic Proton acceptor. Arginine 250 contacts NADPH. Residues valine 274 and glutamate 276 each coordinate NADPH.

This sequence belongs to the NAD-dependent glycerol-3-phosphate dehydrogenase family.

It is found in the cytoplasm. The catalysed reaction is sn-glycerol 3-phosphate + NAD(+) = dihydroxyacetone phosphate + NADH + H(+). It catalyses the reaction sn-glycerol 3-phosphate + NADP(+) = dihydroxyacetone phosphate + NADPH + H(+). It participates in membrane lipid metabolism; glycerophospholipid metabolism. Catalyzes the reduction of the glycolytic intermediate dihydroxyacetone phosphate (DHAP) to sn-glycerol 3-phosphate (G3P), the key precursor for phospholipid synthesis. The polypeptide is Glycerol-3-phosphate dehydrogenase [NAD(P)+] (Erythrobacter litoralis (strain HTCC2594)).